The primary structure comprises 87 residues: Small ribosomal subunit protein uS17 (87 aa).

It belongs to the universal ribosomal protein uS17 family. As to quaternary structure, part of the 30S ribosomal subunit.

In terms of biological role, one of the primary rRNA binding proteins, it binds specifically to the 5'-end of 16S ribosomal RNA. The chain is Small ribosomal subunit protein uS17 from Cytophaga hutchinsonii (strain ATCC 33406 / DSM 1761 / CIP 103989 / NBRC 15051 / NCIMB 9469 / D465).